Reading from the N-terminus, the 158-residue chain is uncharacterized protein (158 aa).

2 consecutive transmembrane segments (helical) span residues 10–30 (LSSL…QFIV) and 137–157 (IEVF…AYFF).

It is found in the cell membrane. This is an uncharacterized protein from Bacillus subtilis (strain 168).